A 652-amino-acid polypeptide reads, in one-letter code: MLSWKNDLTPVSDRFDDIYFSPENGLEETRHVFIGGNDLPDRWRNSNIQNPFCILELGFGTGLNFFATWKEYLKQDNRFRLHFISVEKFPLSRKEISKAVSAFPELEEIKEEFLSSYQDLIPGMNYFRFLEGKIHLTLFLGDVSDALCEISGKADAIFLDGFAPSKNPEMWEESVLGNLKNVSKFGTTFSTFTVARTVRNSLSYAGFTLEKRPGFGKKREMLTGKYSNYPSETKESLPKEKPWCKRSDPESQIKTATIIGAGIAGSTLAYSLSKRGIQVFLIDPSGIANETSGIPRAISHPHLTKIPGPISLFTLRAFRYALSFLSSFADKDQFGKVGSFHGVTAEMNPERFRKSIENHKLTEEIASWKPNGSDFHKNDPFNKELEEGVLFRNGFWTRPGSIARKCVDQPGIELIQATANSFERIGSSWKLDLKESDQKVLADSIIFCNSYLIGKLASSLFEGEEIFPINKVRGQLISLKETENSSRVPNILCAEHYLTPSVQGEHVLGSTFDEFDLNPKPRKKDTDLLLQYVQTKYPTLRFDSNCVLSEKTGFRAQTPDRFPIIGPIFDPKIFQETYKEIDLPRNRNKKFPNLKVIPGLYVFGGLGSRGILSSFLGAEILASLILGEPAPVEFSLLESLHPARFLYRRIRK.

The tRNA (mnm(5)s(2)U34)-methyltransferase stretch occupies residues 1-227 (MLSWKNDLTP…KREMLTGKYS (227 aa)). The FAD-dependent cmnm(5)s(2)U34 oxidoreductase stretch occupies residues 259-652 (IGAGIAGSTL…ARFLYRRIRK (394 aa)).

The protein in the N-terminal section; belongs to the methyltransferase superfamily. tRNA (mnm(5)s(2)U34)-methyltransferase family. In the C-terminal section; belongs to the DAO family. FAD is required as a cofactor.

It is found in the cytoplasm. It catalyses the reaction 5-aminomethyl-2-thiouridine(34) in tRNA + S-adenosyl-L-methionine = 5-methylaminomethyl-2-thiouridine(34) in tRNA + S-adenosyl-L-homocysteine + H(+). Functionally, catalyzes the last two steps in the biosynthesis of 5-methylaminomethyl-2-thiouridine (mnm(5)s(2)U) at the wobble position (U34) in tRNA. Catalyzes the FAD-dependent demodification of cmnm(5)s(2)U34 to nm(5)s(2)U34, followed by the transfer of a methyl group from S-adenosyl-L-methionine to nm(5)s(2)U34, to form mnm(5)s(2)U34. This is tRNA 5-methylaminomethyl-2-thiouridine biosynthesis bifunctional protein MnmC from Leptospira borgpetersenii serovar Hardjo-bovis (strain JB197).